We begin with the raw amino-acid sequence, 229 residues long: C-&gt;U-editing enzyme APOBEC-1 (229 aa).

A CMP/dCMP-type deaminase domain is found at 10–134 (VDPTLRRRIE…PRNRQGLRDL (125 aa)). Residue His-61 coordinates Zn(2+). Residue Glu-63 is the Proton donor of the active site. The Zn(2+) site is built by Cys-93 and Cys-96.

The protein belongs to the cytidine and deoxycytidylate deaminase family. Homodimer. Interacts with A1CF; form an mRNA editing complex. Interacts with RBM47; form an mRNA editing complex. Found in a complex with CELF2/CUGBP2 and A1CF. Interacts with HNRPAB. Interacts with SYNCRIP. Zn(2+) serves as cofactor. As to expression, expressed in the liver as well as small intestine.

It localises to the cytoplasm. The protein localises to the nucleus. It carries out the reaction a cytidine in mRNA + H2O + H(+) = a uridine in mRNA + NH4(+). The catalysed reaction is cytidine(6666) in apoB mRNA + H2O + H(+) = uridine(6666) in apoB mRNA + NH4(+). Functionally, cytidine deaminase catalyzing the cytidine to uridine postranscriptional editing of a variety of mRNAs. Form complexes with cofactors that confer differential editing activity and selectivity. Responsible for the postranscriptional editing of a CAA codon for Gln to a UAA codon for stop in the apolipoprotein B mRNA. Also involved in CGA (Arg) to UGA (Stop) editing in the NF1 mRNA. May also play a role in the epigenetic regulation of gene expression by participating in DNA demethylation. This is C-&gt;U-editing enzyme APOBEC-1 from Rattus norvegicus (Rat).